Reading from the N-terminus, the 209-residue chain is MSKVHVFDHPLIQHKLSYIRDVNTGTKEFRELVDEVGMLMAYEVTRDLELQDVDIETPVTKMTAKRLAGKKLAIVPILRAGLGMTDGILSLVPAARVGHIGLYRDPETLKAVEYFAKLPQDITERQIIVVDPMLATGASAIEAITSLKKRGAKNIRFMCLIAAPEGVEKMHEAHPDVDIYIAALDEKLNDKAYITPGLGDAGDRLFGTK.

5-phospho-alpha-D-ribose 1-diphosphate is bound by residues Arg-79, Arg-104, and 131–139 (DPMLATGAS). Uracil contacts are provided by residues Ile-194 and 199-201 (GDA). Asp-200 lines the 5-phospho-alpha-D-ribose 1-diphosphate pocket.

The protein belongs to the UPRTase family. Requires Mg(2+) as cofactor.

The catalysed reaction is UMP + diphosphate = 5-phospho-alpha-D-ribose 1-diphosphate + uracil. Its pathway is pyrimidine metabolism; UMP biosynthesis via salvage pathway; UMP from uracil: step 1/1. With respect to regulation, allosterically activated by GTP. Functionally, catalyzes the conversion of uracil and 5-phospho-alpha-D-ribose 1-diphosphate (PRPP) to UMP and diphosphate. This Staphylococcus aureus (strain JH1) protein is Uracil phosphoribosyltransferase.